A 402-amino-acid polypeptide reads, in one-letter code: 4-hydroxy-3-methylbut-2-enyl diphosphate reductase (402 aa).

Cysteine 66 contacts [4Fe-4S] cluster. Histidine 96 contributes to the (2E)-4-hydroxy-3-methylbut-2-enyl diphosphate binding site. Histidine 96 is a dimethylallyl diphosphate binding site. Isopentenyl diphosphate is bound at residue histidine 96. Residue cysteine 157 participates in [4Fe-4S] cluster binding. Histidine 185 is a binding site for (2E)-4-hydroxy-3-methylbut-2-enyl diphosphate. Dimethylallyl diphosphate is bound at residue histidine 185. Isopentenyl diphosphate is bound at residue histidine 185. The Proton donor role is filled by glutamate 187. (2E)-4-hydroxy-3-methylbut-2-enyl diphosphate is bound at residue threonine 250. Cysteine 288 is a binding site for [4Fe-4S] cluster. The (2E)-4-hydroxy-3-methylbut-2-enyl diphosphate site is built by serine 317, serine 318, asparagine 319, and serine 379. Serine 317, serine 318, asparagine 319, and serine 379 together coordinate dimethylallyl diphosphate. Residues serine 317, serine 318, asparagine 319, and serine 379 each contribute to the isopentenyl diphosphate site.

This sequence belongs to the IspH family. [4Fe-4S] cluster serves as cofactor.

The catalysed reaction is isopentenyl diphosphate + 2 oxidized [2Fe-2S]-[ferredoxin] + H2O = (2E)-4-hydroxy-3-methylbut-2-enyl diphosphate + 2 reduced [2Fe-2S]-[ferredoxin] + 2 H(+). It catalyses the reaction dimethylallyl diphosphate + 2 oxidized [2Fe-2S]-[ferredoxin] + H2O = (2E)-4-hydroxy-3-methylbut-2-enyl diphosphate + 2 reduced [2Fe-2S]-[ferredoxin] + 2 H(+). It functions in the pathway isoprenoid biosynthesis; dimethylallyl diphosphate biosynthesis; dimethylallyl diphosphate from (2E)-4-hydroxy-3-methylbutenyl diphosphate: step 1/1. Its pathway is isoprenoid biosynthesis; isopentenyl diphosphate biosynthesis via DXP pathway; isopentenyl diphosphate from 1-deoxy-D-xylulose 5-phosphate: step 6/6. Its function is as follows. Catalyzes the conversion of 1-hydroxy-2-methyl-2-(E)-butenyl 4-diphosphate (HMBPP) into a mixture of isopentenyl diphosphate (IPP) and dimethylallyl diphosphate (DMAPP). Acts in the terminal step of the DOXP/MEP pathway for isoprenoid precursor biosynthesis. This is 4-hydroxy-3-methylbut-2-enyl diphosphate reductase from Microcystis aeruginosa (strain NIES-843 / IAM M-2473).